The sequence spans 378 residues: Cytochrome P450 2C15 (378 aa).

Cys-323 is a binding site for heme.

This sequence belongs to the cytochrome P450 family. Requires heme as cofactor.

It localises to the endoplasmic reticulum membrane. The protein resides in the microsome membrane. The enzyme catalyses an organic molecule + reduced [NADPH--hemoprotein reductase] + O2 = an alcohol + oxidized [NADPH--hemoprotein reductase] + H2O + H(+). Functionally, cytochromes P450 are a group of heme-thiolate monooxygenases. In liver microsomes, this enzyme is involved in an NADPH-dependent electron transport pathway. It oxidizes a variety of structurally unrelated compounds, including steroids, fatty acids, and xenobiotics. The polypeptide is Cytochrome P450 2C15 (CYP2C15) (Oryctolagus cuniculus (Rabbit)).